Reading from the N-terminus, the 393-residue chain is MRTHLRASLWVLCLASTAFSILAAVNTSPKPTLASAFSGKAGTTAVKANKTTDELLPMVINTWNFTAANVLAWRILKQSKGGLRQTRNAVVEGCSKCEKLQCDRTVGYGGSPDELGETTLDAMVMDGATMDVGAVAGLRRIKDAIKVARHVLEHTQHTMLVGDAASAFANAMGFESESLVTPESKDMWLQWTAENCQPNFWKNVHPDPKVSCGPYKPRPTPLTRWKEDRARNEYEIGRKNHDTIGMIAIDVENNIHAGTSTNGANHKIPGRVGDSPIPGAGAYADNEVGAAVATGDGDVMMRFLPSLLAVEAMRAGKPPAEAAQKGLRRILKHQKDFMGALIAVDRLGNYGAACYGLAEFPFMVSSPAGADRPTRLETVKCIAGQDKVNIVAL.

A signal peptide spans 1–23; that stretch reads MRTHLRASLWVLCLASTAFSILA. Disulfide bonds link C97–C102 and C196–C212. The Nucleophile role is filled by T243. Substrate contacts are provided by residues 271–274 and 294–297; these read RVGD and TGDG. A disulfide bond links C354 and C381.

It belongs to the Ntn-hydrolase family. As to quaternary structure, heterotetramer of two alpha and two beta chains arranged as a dimer of alpha/beta heterodimers. Cleaved into an alpha and beta chain by autocatalysis; this activates the enzyme. The N-terminal residue of the beta subunit is responsible for the nucleophile hydrolase activity.

The enzyme catalyses N(4)-(beta-N-acetyl-D-glucosaminyl)-L-asparagine + H2O = N-acetyl-beta-D-glucosaminylamine + L-aspartate + H(+). In terms of biological role, cleaves the GlcNAc-Asn bond which joins oligosaccharides to the peptide of asparagine-linked glycoproteins. This is Putative N(4)-(beta-N-acetylglucosaminyl)-L-asparaginase GM21137 from Drosophila sechellia (Fruit fly).